The primary structure comprises 1482 residues: Chromosome partition protein MukB (1482 aa).

34-41 is a binding site for ATP; sequence GGNGAGKS. Coiled-coil stretches lie at residues 326-472, 507-602, 780-805, 832-1110, and 1209-1265; these read LEAD…QTAH, NQRH…RRAP, RAAR…ATLS, DDPE…REQV, and VEAI…LQSV. The flexible hinge stretch occupies residues 666–783; the sequence is PGGSEDPRLN…SLPLFGRAAR (118 aa).

Belongs to the SMC family. MukB subfamily. In terms of assembly, homodimerization via its hinge domain. Binds to DNA via its C-terminal region. Interacts, and probably forms a ternary complex, with MukE and MukF via its C-terminal region. The complex formation is stimulated by calcium or magnesium. Interacts with tubulin-related protein FtsZ.

Its subcellular location is the cytoplasm. It is found in the nucleoid. Functionally, plays a central role in chromosome condensation, segregation and cell cycle progression. Functions as a homodimer, which is essential for chromosome partition. Involved in negative DNA supercoiling in vivo, and by this means organize and compact chromosomes. May achieve or facilitate chromosome segregation by condensation DNA from both sides of a centrally located replisome during cell division. In Klebsiella pneumoniae subsp. pneumoniae (strain ATCC 700721 / MGH 78578), this protein is Chromosome partition protein MukB.